A 349-amino-acid chain; its full sequence is UDP-N-acetylenolpyruvoylglucosamine reductase (349 aa).

The FAD-binding PCMH-type domain maps to 25–197; that stretch reads GIAARARFAA…VAVTFRLPKQ (173 aa). The active site involves Arg173. Ser249 functions as the Proton donor in the catalytic mechanism. Glu345 is an active-site residue.

The protein belongs to the MurB family. FAD serves as cofactor.

The protein resides in the cytoplasm. The catalysed reaction is UDP-N-acetyl-alpha-D-muramate + NADP(+) = UDP-N-acetyl-3-O-(1-carboxyvinyl)-alpha-D-glucosamine + NADPH + H(+). It participates in cell wall biogenesis; peptidoglycan biosynthesis. Cell wall formation. This Burkholderia cenocepacia (strain HI2424) protein is UDP-N-acetylenolpyruvoylglucosamine reductase.